Here is a 514-residue protein sequence, read N- to C-terminus: 6-phosphofructo-2-kinase/fructose-2,6-bisphosphatase 3 (514 aa).

The 6-phosphofructo-2-kinase stretch occupies residues 1 to 245 (MPLELTQSRV…VYYLMNIHVQ (245 aa)). 42–50 (GLPARGKTY) lines the ATP pocket. The beta-D-fructose 6-phosphate site is built by arginine 75 and arginine 99. Aspartate 125 is an active-site residue. Beta-D-fructose 6-phosphate is bound by residues threonine 127 and arginine 133. Residue cysteine 155 is part of the active site. Residue 164–169 (NIMEVK) participates in ATP binding. Lysine 169, arginine 190, and tyrosine 194 together coordinate beta-D-fructose 6-phosphate. The fructose-2,6-bisphosphatase stretch occupies residues 246 to 514 (PRTIYLCRHG…QPLLGQACLT (269 aa)). Arginine 253 is a binding site for beta-D-fructose 2,6-bisphosphate. Histidine 254 serves as the catalytic Tele-phosphohistidine intermediate. Beta-D-fructose 2,6-bisphosphate is bound by residues asparagine 260 and glycine 266. The active-site Proton donor/acceptor is the glutamate 323. 6 residues coordinate beta-D-fructose 2,6-bisphosphate: tyrosine 334, arginine 348, lysine 352, tyrosine 363, glutamine 389, and arginine 393. 345–348 (YALR) lines the ATP pocket. Residues 389–393 (QAVLR) and tyrosine 425 contribute to the ATP site. The disordered stretch occupies residues 444–475 (ERSEDAKKGPNPLMRRNSVTPLASPEPTKKPR). The residue at position 461 (serine 461) is a Phosphoserine; by AMPK and PKA. Threonine 463 bears the Phosphothreonine mark. A Phosphoserine modification is found at serine 467. A Phosphothreonine; by PKC modification is found at threonine 471.

This sequence in the C-terminal section; belongs to the phosphoglycerate mutase family. As to quaternary structure, homodimer. Forms a heterodimer with PFKFB2. Phosphorylation by AMPK stimulates activity.

The catalysed reaction is beta-D-fructose 2,6-bisphosphate + H2O = beta-D-fructose 6-phosphate + phosphate. It catalyses the reaction beta-D-fructose 6-phosphate + ATP = beta-D-fructose 2,6-bisphosphate + ADP + H(+). In terms of biological role, catalyzes both the synthesis and degradation of fructose 2,6-bisphosphate. The chain is 6-phosphofructo-2-kinase/fructose-2,6-bisphosphatase 3 (PFKFB3) from Pongo abelii (Sumatran orangutan).